We begin with the raw amino-acid sequence, 840 residues long: Translation initiation factor IF-2 (840 aa).

The span at 95–143 shows a compositional bias: basic and acidic residues; sequence RSPDEIEAERQRELEEQRAAEEAERLKAEEAAARQRAEEEARKAEEAAR. Disordered stretches follow at residues 95-155 and 172-256; these read RSPD…ATAG and KPAA…PTGP. Residues 144–155 are compositionally biased toward low complexity; it reads AKAAQEAAATAG. Basic and acidic residues-rich tracts occupy residues 175–191 and 223–232; these read AVEE…PKRD and STDEESDGYR. Residues 233–247 are compositionally biased toward basic residues; it reads RGGRGGKSKLKKRNQ. A tr-type G domain is found at 340-509; it reads TRAPVVTVMG…LLQAEVLELK (170 aa). Residues 349-356 are G1; it reads GHVDHGKT. 349–356 contributes to the GTP binding site; it reads GHVDHGKT. The segment at 374-378 is G2; it reads GITQH. Residues 395 to 398 are G3; that stretch reads DTPG. GTP-binding positions include 395–399 and 449–452; these read DTPGH and NKID. The segment at 449–452 is G4; sequence NKID. The segment at 485 to 487 is G5; sequence SAK.

The protein belongs to the TRAFAC class translation factor GTPase superfamily. Classic translation factor GTPase family. IF-2 subfamily.

It localises to the cytoplasm. Its function is as follows. One of the essential components for the initiation of protein synthesis. Protects formylmethionyl-tRNA from spontaneous hydrolysis and promotes its binding to the 30S ribosomal subunits. Also involved in the hydrolysis of GTP during the formation of the 70S ribosomal complex. This Pseudomonas aeruginosa (strain LESB58) protein is Translation initiation factor IF-2.